The primary structure comprises 365 residues: DNA replication and repair protein RecF (365 aa).

ATP is bound at residue 30–37 (GPNGSGKT).

This sequence belongs to the RecF family.

It localises to the cytoplasm. The RecF protein is involved in DNA metabolism; it is required for DNA replication and normal SOS inducibility. RecF binds preferentially to single-stranded, linear DNA. It also seems to bind ATP. This Azotobacter vinelandii (strain DJ / ATCC BAA-1303) protein is DNA replication and repair protein RecF.